We begin with the raw amino-acid sequence, 316 residues long: HPr kinase/phosphorylase (316 aa).

Active-site residues include His-143 and Lys-164. ATP is bound at residue 158-165; the sequence is GEAGSGKS. Residue Ser-165 coordinates Mg(2+). Asp-182 acts as the Proton acceptor; for phosphorylation activity. Proton donor; for dephosphorylation activity in catalysis. The important for the catalytic mechanism of both phosphorylation and dephosphorylation stretch occupies residues 206 to 215; the sequence is LEVRGLGVLN. Glu-207 serves as a coordination point for Mg(2+). Arg-251 is an active-site residue. Residues 272-277 are important for the catalytic mechanism of dephosphorylation; it reads PVMPGR.

Belongs to the HPrK/P family. In terms of assembly, homohexamer. The cofactor is Mg(2+).

The catalysed reaction is [HPr protein]-L-serine + ATP = [HPr protein]-O-phospho-L-serine + ADP + H(+). The enzyme catalyses [HPr protein]-O-phospho-L-serine + phosphate + H(+) = [HPr protein]-L-serine + diphosphate. Catalyzes the ATP- as well as the pyrophosphate-dependent phosphorylation of a specific serine residue in HPr, a phosphocarrier protein of the phosphoenolpyruvate-dependent sugar phosphotransferase system (PTS). HprK/P also catalyzes the pyrophosphate-producing, inorganic phosphate-dependent dephosphorylation (phosphorolysis) of seryl-phosphorylated HPr (P-Ser-HPr). This is HPr kinase/phosphorylase from Stenotrophomonas maltophilia (strain K279a).